A 223-amino-acid polypeptide reads, in one-letter code: Serum amyloid P-component (223 aa).

The first 19 residues, 1-19, serve as a signal peptide directing secretion; it reads MNKPLLWISVLTSLLEAFA. The Pentraxin (PTX) domain maps to 24–223; it reads SGKVFVFPRE…YVIIKPLVWV (200 aa). Residue Asn-51 is glycosylated (N-linked (GlcNAc...) asparagine). Cys-55 and Cys-114 form a disulfide bridge. 6 residues coordinate Ca(2+): Asp-77, Asn-78, Glu-155, Gln-156, Asp-157, and Gln-167.

This sequence belongs to the pentraxin family. As to quaternary structure, homopentamer. Pentraxin (or pentaxin) have a discoid arrangement of 5 non-covalently bound subunits. It depends on Ca(2+) as a cofactor. In terms of processing, N-glycosylated with a complex biantennary oligosaccharide chain with a sialic acid at the end (disialo-SAP). Monosialo-SAP as well as asioalo-SAP are also detected. As to expression, found in serum and urine.

The protein localises to the secreted. Can interact with DNA and histones and may scavenge nuclear material released from damaged circulating cells. May also function as a calcium-dependent lectin. This chain is Serum amyloid P-component (APCS), found in Homo sapiens (Human).